The chain runs to 498 residues: GTPase Der (498 aa).

EngA-type G domains follow at residues 3-167 (PVVA…FDDL) and 210-383 (IKLA…KSAT). Residues 9 to 16 (GRPNVGKS), 57 to 61 (DTGGI), 119 to 122 (NKID), 216 to 223 (GRPNVGKS), 263 to 267 (DTAGV), and 328 to 331 (NKWD) contribute to the GTP site. Residues 384-468 (TRVGTSVLTR…PIRINFQNSD (85 aa)) form the KH-like domain.

Belongs to the TRAFAC class TrmE-Era-EngA-EngB-Septin-like GTPase superfamily. EngA (Der) GTPase family. Associates with the 50S ribosomal subunit.

In terms of biological role, GTPase that plays an essential role in the late steps of ribosome biogenesis. The sequence is that of GTPase Der from Vibrio campbellii (strain ATCC BAA-1116).